We begin with the raw amino-acid sequence, 248 residues long: NH(3)-dependent NAD(+) synthetase (248 aa).

31 to 38 serves as a coordination point for ATP; sequence GLSGGVDS. Asp37 provides a ligand contact to Mg(2+). A deamido-NAD(+)-binding site is contributed by Arg114. Thr134 is an ATP binding site. Residue Glu139 participates in Mg(2+) binding. Deamido-NAD(+) contacts are provided by Lys147 and Asp154. Residues Lys163 and Thr185 each coordinate ATP. 232–233 contacts deamido-NAD(+); sequence HK.

This sequence belongs to the NAD synthetase family. As to quaternary structure, homodimer.

The catalysed reaction is deamido-NAD(+) + NH4(+) + ATP = AMP + diphosphate + NAD(+) + H(+). Its pathway is cofactor biosynthesis; NAD(+) biosynthesis; NAD(+) from deamido-NAD(+) (ammonia route): step 1/1. Catalyzes the ATP-dependent amidation of deamido-NAD to form NAD. Uses ammonia as a nitrogen source. The chain is NH(3)-dependent NAD(+) synthetase from Mycoplasma pneumoniae (strain ATCC 29342 / M129 / Subtype 1) (Mycoplasmoides pneumoniae).